A 512-amino-acid polypeptide reads, in one-letter code: FACT complex subunit pob3 (512 aa).

The span at 460–504 (LDDEDEEGDEEMEEALSEDEDFQAESESDVAEEYDENAESSDEEG) shows a compositional bias: acidic residues. The segment at 460 to 512 (LDDEDEEGDEEMEEALSEDEDFQAESESDVAEEYDENAESSDEEGASGAEGSE) is disordered.

It belongs to the SSRP1 family. In terms of assembly, forms a stable heterodimer with spt16. The spt16-pob3 dimer weakly associates with multiple molecules of nhp6 to form the FACT complex. Interacts with abo1.

It is found in the nucleus. The protein localises to the chromosome. Functionally, component of the FACT complex, a general chromatin factor that acts to reorganize nucleosomes. The FACT complex is involved in multiple processes that require DNA as a template such as mRNA elongation, DNA replication and DNA repair. During transcription elongation the FACT complex acts as a histone chaperone that both destabilizes and restores nucleosomal structure. It facilitates the passage of RNA polymerase II and transcription by promoting the dissociation of one histone H2A-H2B dimer from the nucleosome, then subsequently promotes the reestablishment of the nucleosome following the passage of RNA polymerase II. The polypeptide is FACT complex subunit pob3 (Schizosaccharomyces pombe (strain 972 / ATCC 24843) (Fission yeast)).